Consider the following 1337-residue polypeptide: Receptor-type tyrosine-protein phosphatase eta (1337 aa).

The signal sequence occupies residues 1–35; the sequence is MKPAAREARLPPRSPGLRWALPLLLLLLRLGQILC. Topologically, residues 36–975 are extracellular; the sequence is AGGTPSPIPD…LPQDPGVICG (940 aa). Composition is skewed to polar residues over residues 67–82 and 89–119; these read SFHK…VETN and SSGA…STGP. The tract at residues 67 to 124 is disordered; sequence SFHKQNGTGTPQVETNTSEDGESSGANDSLRTPEQGSNGTDGASQKTPSSTGPSPVFD. Residues Asn-72, Asn-82, Asn-93, Asn-104, Asn-142, Asn-172, Asn-192, Asn-231, Asn-258, Asn-278, Asn-342, Asn-351, Asn-376, Asn-391, Asn-396, Asn-413, Asn-431, Asn-501, Asn-525, Asn-536, Asn-582, Asn-603, Asn-618, Asn-628, Asn-637, Asn-666, Asn-669, Asn-761, Asn-772, Asn-784, Asn-790, Asn-824, Asn-910, and Asn-937 are each glycosylated (N-linked (GlcNAc...) asparagine). 9 consecutive Fibronectin type-III domains span residues 121 to 209, 207 to 291, 271 to 364, 368 to 456, 457 to 541, 542 to 623, 625 to 720, 721 to 817, and 816 to 902; these read PVFD…EPIP, PIPV…EGGL, NPYL…EFRT, QVFD…PPVP, VSDF…TVPS, AVFD…TAQY, RPSN…TDPA, SMAS…TDPP, and PPPP…SEVL. A disordered region spans residues 278-327; that stretch reads NKTKGDPLGTEGGLDASNTERSRAGSPTAPVHDESLVGPVDPSSGQQSRD. Residues 976–996 traverse the membrane as a helical segment; that stretch reads AVFGCIFGALVIVTVGGFIFW. Residues 997–1337 lie on the Cytoplasmic side of the membrane; sequence RKKRKDAKNN…TFGKTNGYIA (341 aa). Ser-1009 carries the phosphoserine modification. In terms of domain architecture, Tyrosine-protein phosphatase spans 1041 to 1298; the sequence is FAEEYEDLKL…VFLNQCVLDI (258 aa). Substrate contacts are provided by residues Asp-1205, 1239 to 1245, and Gln-1283; that span reads CSAGVGR. The Phosphocysteine intermediate role is filled by Cys-1239.

It belongs to the protein-tyrosine phosphatase family. Receptor class 3 subfamily. In terms of assembly, monomer. Interacts with CTNNB1 (phosphorylated) and JUP (phosphorylated). Interacts with FLT3 (phosphorylated). Interacts with GAB1 and GRB2. N- and O-glycosylated. In terms of processing, N-glycosylated. Expressed in the promyelocytic cell line HL-60, the granulocyte-macrophage colony-stimulating factor-dependent leukemic cell line F-36P, and the IL3 and erythropoietin-dependent leukemic cell line F-36E. Expressed predominantly in epithelial cells and lymphocytes. Enhanced expression at high cell density. In terms of tissue distribution, expressed in the brain.

The protein resides in the cell membrane. The protein localises to the cell projection. It localises to the ruffle membrane. It is found in the cell junction. Its subcellular location is the secreted. The protein resides in the extracellular space. The enzyme catalyses O-phospho-L-tyrosyl-[protein] + H2O = L-tyrosyl-[protein] + phosphate. Tyrosine phosphatase which dephosphorylates or contributes to the dephosphorylation of CTNND1, FLT3, PDGFRB, MET, KDR, LYN, SRC, MAPK1, MAPK3, EGFR, TJP1, OCLN, PIK3R1 and PIK3R2. Plays a role in cell adhesion, migration, proliferation and differentiation. Has a role in megakaryocytes and platelet formation. Involved in vascular development. Regulator of macrophage adhesion and spreading. Positively affects cell-matrix adhesion. Positive regulator of platelet activation and thrombosis. Negative regulator of cell proliferation. Negative regulator of PDGF-stimulated cell migration; through dephosphorylation of PDGFR. Positive regulator of endothelial cell survival, as well as of VEGF-induced SRC and AKT activation; through KDR dephosphorylation. Negative regulator of EGFR signaling pathway; through EGFR dephosphorylation. Enhances the barrier function of epithelial junctions during reassembly. Negatively regulates T-cell receptor (TCR) signaling. Upon T-cell TCR activation, it is up-regulated and excluded from the immunological synapses, while upon T-cell-antigen presenting cells (APC) disengagement, it is no longer excluded and can dephosphorylate PLCG1 and LAT to down-regulate prolongation of signaling. In terms of biological role, activates angiogenesis and cell migration. Downregulates the expression of the endothelial adhesion molecules ICAM1 and VCAM1. The sequence is that of Receptor-type tyrosine-protein phosphatase eta (PTPRJ) from Homo sapiens (Human).